Reading from the N-terminus, the 229-residue chain is Small ribosomal subunit protein uS3c (229 aa).

Residues 39-128 (LRDNLFKQYP…RIILTILKVQ (90 aa)) form the KH type-2 domain.

The protein belongs to the universal ribosomal protein uS3 family. Part of the 30S ribosomal subunit.

The protein localises to the plastid. The protein resides in the chloroplast. The protein is Small ribosomal subunit protein uS3c (rps3) of Tupiella akineta (Green alga).